We begin with the raw amino-acid sequence, 90 residues long: Small ribosomal subunit protein uS15c (90 aa).

Belongs to the universal ribosomal protein uS15 family. Part of the 30S ribosomal subunit.

The protein resides in the plastid. The protein is Small ribosomal subunit protein uS15c (rps15) of Cuscuta reflexa (Southern Asian dodder).